We begin with the raw amino-acid sequence, 462 residues long: BBSome complex member bbs-4 (462 aa).

The interval 1-46 (MEASNQDEIIGTDVIPNEQDNPEEVVPEPTSLDVPPPPPERAPSAP) is disordered. TPR repeat units lie at residues 89–122 (EAAF…SGKN), 124–156 (RYFY…MKDN), 199–232 (ATLI…QPDN), 234–266 (EVMN…DPAN), 268–300 (QAIL…SDYN), 335–368 (YKIS…YPQN), and 369–402 (AKAV…KKNP).

It belongs to the BBS4 family. In terms of assembly, part of BBSome complex, that contains at least bbs-1, bbs-2, bbs-4, bbs-5, osm-12, bbs-8/ttc-8 and bbs-9. Interacts (via C-terminus) with bbs-5; the interaction is direct.

The protein resides in the cytoplasm. It is found in the cytoskeleton. The protein localises to the microtubule organizing center. Its subcellular location is the centrosome. It localises to the cell projection. The protein resides in the cilium membrane. Functionally, component of the BBSome complex. The BBSome complex is thought to function as a coat complex required for sorting of specific membrane proteins to the primary cilia. The BBSome complex is required for ciliogenesis but is dispensable for centriolar satellite function. Required for proper BBSome complex assembly and its ciliary localization. May be required for microtubule anchoring at the centrosome but not for microtubule nucleation. May be required for the dynein-mediated transport of pericentriolar proteins to the centrosome. Required, redundantly with bbs-5, for cilia biogenesis and both the assembly and movement of intraflagellar transport proteins along the ciliary axoneme. Plays a role in the removal of degraded mechanosensory receptors within the cilia. The chain is BBSome complex member bbs-4 from Caenorhabditis elegans.